The chain runs to 300 residues: 33 kDa chaperonin (300 aa).

2 disulfides stabilise this stretch: Cys-235-Cys-237 and Cys-269-Cys-272.

The protein belongs to the HSP33 family. Post-translationally, under oxidizing conditions two disulfide bonds are formed involving the reactive cysteines. Under reducing conditions zinc is bound to the reactive cysteines and the protein is inactive.

The protein localises to the cytoplasm. Its function is as follows. Redox regulated molecular chaperone. Protects both thermally unfolding and oxidatively damaged proteins from irreversible aggregation. Plays an important role in the bacterial defense system toward oxidative stress. In Pseudomonas syringae pv. syringae (strain B728a), this protein is 33 kDa chaperonin.